The chain runs to 207 residues: Ribonuclease HII (207 aa).

Residues 12–201 (DLVAGVDEVG…VRAAWEAREG (190 aa)) enclose the RNase H type-2 domain. Residues aspartate 18, glutamate 19, and aspartate 110 each coordinate a divalent metal cation.

Belongs to the RNase HII family. Mn(2+) serves as cofactor. It depends on Mg(2+) as a cofactor.

It is found in the cytoplasm. It catalyses the reaction Endonucleolytic cleavage to 5'-phosphomonoester.. Its function is as follows. Endonuclease that specifically degrades the RNA of RNA-DNA hybrids. The sequence is that of Ribonuclease HII from Pseudomonas putida (strain ATCC 47054 / DSM 6125 / CFBP 8728 / NCIMB 11950 / KT2440).